Consider the following 272-residue polypeptide: Large ribosomal subunit protein uL3 (272 aa).

A disordered region spans residues 125–146 (QHIGPKSHGGGGGSQPLRQTGS).

It belongs to the universal ribosomal protein uL3 family. As to quaternary structure, part of the 50S ribosomal subunit. Forms a cluster with proteins L14 and L19.

Its function is as follows. One of the primary rRNA binding proteins, it binds directly near the 3'-end of the 23S rRNA, where it nucleates assembly of the 50S subunit. The sequence is that of Large ribosomal subunit protein uL3 from Metamycoplasma arthritidis (strain 158L3-1) (Mycoplasma arthritidis).